Reading from the N-terminus, the 499-residue chain is Serine carboxypeptidase 1 (499 aa).

The N-terminal stretch at 1–30 (MARCRRRSGCTAGAALLLLLALALSGGGGA) is a signal peptide. 3 disulfide bridges follow: cysteine 92/cysteine 388, cysteine 256/cysteine 268, and cysteine 291/cysteine 355. N-linked (GlcNAc...) asparagine glycosylation occurs at asparagine 148. Serine 188 is a catalytic residue. An N-linked (GlcNAc...) asparagine glycan is attached at asparagine 262. The propeptide at 297–351 (IKEVNLQNSKLPQSFKDLGTTNKPFPVRTRMLGRAWPLRAPVKAGRVPSWQEVAS) is linker peptide. An N-linked (GlcNAc...) asparagine glycan is attached at asparagine 407. Active-site residues include aspartate 423 and histidine 476. The Microbody targeting signal motif lies at 497-499 (SKL).

Belongs to the peptidase S10 family. In terms of assembly, carboxypeptidase I is a dimer, where each monomer is composed of two chains linked by disulfide bonds. Post-translationally, the linker peptide is endoproteolytically excised during enzyme maturation.

It is found in the secreted. The catalysed reaction is Release of a C-terminal amino acid with broad specificity.. Functionally, may be involved in the degradation of small peptides (2-5 residues) or in the degradation of storage proteins in the embryo. This is Serine carboxypeptidase 1 (CBP1) from Hordeum vulgare (Barley).